The sequence spans 252 residues: NAD-dependent protein deacetylase (252 aa).

The Deacetylase sirtuin-type domain occupies 1–248 (MYLVEEAKKV…PEVISHIQSL (248 aa)). Ala-26, Thr-30, Phe-37, Arg-38, Gln-102, Val-104, Asp-105, and His-120 together coordinate NAD(+). Phe-37 lines the nicotinamide pocket. The nicotinamide site is built by Val-104 and Asp-105. Residue His-120 is the Proton acceptor of the active site. Positions 128, 131, 153, and 155 each coordinate Zn(2+). NAD(+) contacts are provided by Ser-191, Ser-192, Asn-216, and Ile-234.

The protein belongs to the sirtuin family. Class U subfamily. The cofactor is Zn(2+).

It localises to the cytoplasm. It catalyses the reaction N(6)-acetyl-L-lysyl-[protein] + NAD(+) + H2O = 2''-O-acetyl-ADP-D-ribose + nicotinamide + L-lysyl-[protein]. Its function is as follows. NAD-dependent protein deacetylase which modulates the activities of several enzymes which are inactive in their acetylated form. Deacetylates the N-terminal lysine residue of Alba, the major archaeal chromatin protein and that, in turn, increases Alba's DNA binding affinity, thereby repressing transcription. This chain is NAD-dependent protein deacetylase, found in Sulfolobus acidocaldarius (strain ATCC 33909 / DSM 639 / JCM 8929 / NBRC 15157 / NCIMB 11770).